A 333-amino-acid polypeptide reads, in one-letter code: Transcription factor MYB36 (333 aa).

2 consecutive HTH myb-type domains span residues 9-62 (KANV…LNYL) and 63-117 (RPNI…KKKL). 2 consecutive DNA-binding regions (H-T-H motif) follow at residues 38-62 (WIALPQKIGLKRCGKSCRLRWLNYL) and 90-113 (WSIIAAQLPGRTDNDIKNYWNTKL). The tract at residues 119 to 150 (GRQKQMNRQDSITDSTENNLSNNNNNKSPQNL) is disordered. Residues 122–135 (KQMNRQDSITDSTE) are compositionally biased toward polar residues. Positions 136 to 150 (NNLSNNNNNKSPQNL) are enriched in low complexity.

In terms of tissue distribution, expressed in leaves, roots (endodermis-specific) and seedlings.

It localises to the nucleus. In terms of biological role, transcription factors that activates genes required for endodermal differentiation but represses genes involved in proliferative divisions, thus regulating the transition from proliferation to differentiation in root endodermis. Required for Casparian strip formation by positively regulating the expression of the Casparian strip genes CASP1, PER64 and ESB1 and other endodermis-specific genes, thus triggering correct localized lignin biosynthesis in root endodermis and subsequently regulating global ion homeostasis. This chain is Transcription factor MYB36, found in Arabidopsis thaliana (Mouse-ear cress).